The sequence spans 109 residues: U4-lycotoxin-Ls1b (109 aa).

An N-terminal signal peptide occupies residues 1-22 (MKVLVLFSVLFLTLFSYSSTEA). Residues 23 to 44 (IDEFDSDAEDDMLSLMANEQVR) constitute a propeptide that is removed on maturation. Positions 45-88 (AKACTPRLHDCSHDRHSCCRGELSKDVCYCFYPEGEDKTEVCSC) are knottin domain. 4 cysteine pairs are disulfide-bonded: Cys48–Cys63, Cys55–Cys72, Cys62–Cys88, and Cys74–Cys86. The tract at residues 89–108 (QQPKSHKYIEKVVDKAKTVV) is linear cationic cytotoxin domain.

It belongs to the neurotoxin 19 (CSTX) family. 05 (U4-Lctx) subfamily. As to expression, expressed by the venom gland.

It localises to the secreted. Its function is as follows. Enhances the high-affinity desensitization of human P2RX3 purinoceptors. In Lycosa singoriensis (Wolf spider), this protein is U4-lycotoxin-Ls1b.